The sequence spans 194 residues: MAKYNEKELADTSKFLSFVLRHKPEAIGIVLDREGWADIDKLILCAQKAGKRLTRALLDTVVATSDKKRFSYSSDGRCIRAVQGHSTSQVAISFAEKTPPQFLYHGTASRFLDEIKKQGLIAGERHYVHLSADEATARKVGARYGSPVILTVKAQEMAKRGIPFWQAENGVWLTSTVAVEFLEWPFMPAGVQKQ.

The protein belongs to the KptA/TPT1 family.

In terms of biological role, removes the 2'-phosphate from RNA via an intermediate in which the phosphate is ADP-ribosylated by NAD followed by a presumed transesterification to release the RNA and generate ADP-ribose 1''-2''-cyclic phosphate (APPR&gt;P). May function as an ADP-ribosylase. The polypeptide is Probable RNA 2'-phosphotransferase (Escherichia coli O45:K1 (strain S88 / ExPEC)).